A 224-amino-acid polypeptide reads, in one-letter code: Cytidylate kinase (224 aa).

Residue 10 to 18 participates in ATP binding; it reads GPSGVGKGT.

The protein belongs to the cytidylate kinase family. Type 1 subfamily.

The protein localises to the cytoplasm. It catalyses the reaction CMP + ATP = CDP + ADP. The catalysed reaction is dCMP + ATP = dCDP + ADP. The chain is Cytidylate kinase from Haemophilus ducreyi (strain 35000HP / ATCC 700724).